Reading from the N-terminus, the 338-residue chain is Solute carrier family 35 member G5 (338 aa).

The interval 1–27 (MAGSHPYFNLPDSTHPSPPSAPPSLRW) is disordered. 9 helical membrane passes run 37 to 57 (TNGL…VGPL), 67 to 87 (LPSL…ALLL), 102 to 122 (GWAC…YSAV), 160 to 180 (CGLL…LWTL), 190 to 210 (TLGY…LLVY), 221 to 241 (TVAF…LFVL), 250 to 270 (LLSW…FTCV), 281 to 301 (LVCA…YYML), and 305 to 325 (VALS…IITA). The 126-residue stretch at 49–174 (LPAGFVGPLS…SILGLIIILG (126 aa)) folds into the EamA 1 domain. The 54-residue stretch at 272 to 325 (YAVTKAHPALVCAVLHSEVVVALILQYYMLHETVALSDIMGAGVVLGSIAIITA) folds into the EamA 2 domain.

It belongs to the SLC35G solute transporter family. As to expression, expressed in placenta and testis.

The protein localises to the membrane. This is Solute carrier family 35 member G5 (SLC35G5) from Homo sapiens (Human).